A 170-amino-acid polypeptide reads, in one-letter code: Envelope protein 168 (170 aa).

M1 is a topological domain (intravirion). Residues 2 to 22 (FYPVVQILIGIILVIILILGF) form a helical membrane-spanning segment. At 23–170 (YHLKRKPPKK…TVMGIARNVL (148 aa)) the chain is on the virion surface side.

It belongs to the asfivirus envelope protein p22 family.

It localises to the virion membrane. The protein resides in the host cell membrane. The chain is Envelope protein 168 from African swine fever virus (isolate Tick/South Africa/Pretoriuskop Pr4/1996) (ASFV).